The primary structure comprises 98 residues: Large ribosomal subunit protein uL23 (98 aa).

This sequence belongs to the universal ribosomal protein uL23 family. Part of the 50S ribosomal subunit. Contacts protein L29, and trigger factor when it is bound to the ribosome.

Functionally, one of the early assembly proteins it binds 23S rRNA. One of the proteins that surrounds the polypeptide exit tunnel on the outside of the ribosome. Forms the main docking site for trigger factor binding to the ribosome. This Rickettsia peacockii (strain Rustic) protein is Large ribosomal subunit protein uL23.